The primary structure comprises 382 residues: WD repeat-containing protein 55 (382 aa).

The segment covering 1-11 (MDRMCEERAAE) has biased composition (basic and acidic residues). The interval 1–31 (MDRMCEERAAEDGSDEEDPDATEAPARIRDT) is disordered. The segment covering 12-21 (DGSDEEDPDA) has biased composition (acidic residues). The residue at position 14 (serine 14) is a Phosphoserine. WD repeat units follow at residues 36-75 (VLEA…GETK), 82-121 (HHLK…LERR), 125-163 (AHGA…PLMD), 166-205 (QHEE…FELL), 208-247 (PQSG…ATSD), 250-289 (ALRA…VVGS), and 293-332 (HAEE…ALVV). Phosphoserine occurs at positions 354 and 381.

Belongs to the WD repeat WDR55 family.

It is found in the nucleus. The protein localises to the nucleolus. Its subcellular location is the cytoplasm. Its function is as follows. Nucleolar protein that acts as a modulator of rRNA synthesis. Plays a central role during organogenesis. This Bos taurus (Bovine) protein is WD repeat-containing protein 55 (WDR55).